The chain runs to 516 residues: MTMEDRIDELREKREEALKGGGEDRIASQHDKGKMTARERIDYFLDDGTFREFDQFRTHRNHKFGMEETKLPGDGVITGHGEVDGRTVFVFAHDFTVFGGSLGEVFAEKICKVMDKAMEVGAPVIGLNDSAGARIQEGVQSLGGFGEIFRRNTEASGVVPQISAIMGPCAGGAVYSPALTDFTFMVRDTSHMFITGPDVIKTVTGEEVTFDELGGATTHTSTSGVAHFATDTEEQALDDIRHLLSYLPQNNVEDPPRVEPWDDPERVADELEEIVPDQPRKPYDIHDVLNGVLDEGSFFGVQEDFAKNIVVGFGRLDGHSVGIVANQPRVNAGTLDIEASEKGARFIRFCDSFNIPILSFVDVPGFLPGTDQEHNGIIRHGAKLLYAYSEATVPLMTVITRKAYGGAYDVMASKHLGADVNYAWPTAEIAVMGPQGAVNILYRDELEAADDPDARRDELIEEYREEFANPYTAADRGFVDDVIEPGDTRNRLIADLRMLKSKRKSQPDKKHGNIPL.

Positions M1–K32 are disordered. In terms of domain architecture, CoA carboxyltransferase N-terminal spans M3–E259. The CoA carboxyltransferase C-terminal domain maps to D263–K509.

This sequence belongs to the AccD/PCCB family. The propionyl coenzyme A carboxylase (PCC) complex is composed of three subunits: PccA (biotin carboxylase and biotin-carboxyl carrier), PccB (carboxyltransferase) and PccX.

It carries out the reaction propanoyl-CoA + hydrogencarbonate + ATP = (S)-methylmalonyl-CoA + ADP + phosphate + H(+). The protein operates within metabolic intermediate metabolism; propanoyl-CoA degradation; succinyl-CoA from propanoyl-CoA: step 1/3. Its function is as follows. Part of the propionyl coenzyme A carboxylase (PCC) complex involved in propionate utilization and in the production of the poly(3-hydroxybutyrate-co-3-hydroxyvalerate)(PHBV), which is a water-insoluble biopolymer used as intracellular energy reserve material when cells grow under conditions of nutrient limitation. The complex catalyzes the carboxylation of propionyl-CoA to methylmalonyl-CoA. PCC is also able to catalyze the carboxylation of acetyl-CoA. This Haloferax mediterranei (strain ATCC 33500 / DSM 1411 / JCM 8866 / NBRC 14739 / NCIMB 2177 / R-4) (Halobacterium mediterranei) protein is Propionyl-CoA carboxylase, carboxyltransferase subunit.